We begin with the raw amino-acid sequence, 554 residues long: MSLCTSSHKDFSQLLPLQDIGCNKTEIKNSPAGVISPAPYSCNQSTLTAEHSPVYIPSSYMESRHEYSTMAFCSPAMVNYNIASNFGDPEAVAARQTSSPGALWSAPGHLSPLSLHCQSSLLYAEQPKSLWCEARPMEPVLPGSRETLKRKTNGNDCTSPIANNPGSKKDAHFCAVCSDYASGYHYGVWSCEGCKAFFKRSIQGHNDYICPATNQCTIDKNRRKSCQACRLRKCYEVGMMKCGSRRERCGYRILRSHRGAEERVHCLGRARRYSEAATRVKEILLSTVSPEQFVLTLLEAEPPHVLVSRPSKPFTEASMMMSLTKLADKELVHMIGWAKKIPGFIDLSLYDQVRLLESCWMEVLMIGLMWRSIDHPGKLIFAPDLVLDRDEGKCVEGILEIFDMLLAMTSRFRELKLQHKEYLCVKAMILLNSSMFPLSAEEPESNRKLHHLLNVVTEALVWVIAKSGIPSQQQTTRLANLLMLLSHVRHASNKGMEHLLSMKCKNVVPVYDLLLEMLNAHTLRGQRKPLATHPEFGPLEQMEPGESLRKGEPQ.

The interval 25-173 is modulating; sequence TEIKNSPAGV…NPGSKKDAHF (149 aa). NR C4-type zinc fingers lie at residues 174–194 and 210–234; these read CAVC…CEGC and CPAT…LRKC. A DNA-binding region (nuclear receptor) is located at residues 174–239; that stretch reads CAVCSDYASG…RLRKCYEVGM (66 aa). An NR LBD domain is found at 289–521; sequence SPEQFVLTLL…DLLLEMLNAH (233 aa). The segment at 529-554 is disordered; the sequence is PLATHPEFGPLEQMEPGESLRKGEPQ.

Belongs to the nuclear hormone receptor family. NR3 subfamily. As to quaternary structure, binds DNA as a homodimer. Can form a heterodimer with ER-alpha. As to expression, brain, pituitary, skeletal muscle, liver, adrenal, kidney, intestine and ovary.

The protein resides in the nucleus. Binds estrogens with an affinity similar to that of ER-alpha, and activates expression of reporter genes containing estrogen response elements (ERE) in an estrogen-dependent manner. Locally synthesized estrogens may act via ER beta, in addition to ER alpha, to mediate seasonal or developmental effects on nearby song nuclei. The polypeptide is Estrogen receptor beta (ESR2) (Sturnus vulgaris (Starling)).